The chain runs to 212 residues: MTHSKRWLEEHEKDPYVKRAKKEGYPSRAAYKLLEIHQKYKLFKPSMNVIDLGAAPGGWSQVAKDLVGPKGVVIAIDLLPIQSMLDVIFIQGDFNEPEIFNQLEAIVAKKTLTGQVDLVISDMAPNISGIKNVDQSRSLHLVELAWDCAQKLLARGGTFLVKVFQGPGVDRFLINLRPYFNQVKFLKPSASRSRSSEIYILAGEFLGYNQRV.

Residues Gly-57, Trp-59, Asp-77, Asp-93, and Asp-122 each contribute to the S-adenosyl-L-methionine site. Lys-162 serves as the catalytic Proton acceptor.

Belongs to the class I-like SAM-binding methyltransferase superfamily. RNA methyltransferase RlmE family.

Its subcellular location is the cytoplasm. The catalysed reaction is uridine(2552) in 23S rRNA + S-adenosyl-L-methionine = 2'-O-methyluridine(2552) in 23S rRNA + S-adenosyl-L-homocysteine + H(+). Specifically methylates the uridine in position 2552 of 23S rRNA at the 2'-O position of the ribose in the fully assembled 50S ribosomal subunit. In Coxiella burnetii (strain CbuK_Q154) (Coxiella burnetii (strain Q154)), this protein is Ribosomal RNA large subunit methyltransferase E.